The sequence spans 99 residues: Bombyxin A-1 homolog (99 aa).

A signal peptide spans 1 to 19; it reads MKTQVLFLVFALAAVMVSG. 3 disulfide bridges follow: Cys-27–Cys-86, Cys-39–Cys-99, and Cys-85–Cys-90. Residues 48-76 constitute a propeptide, c peptide like; the sequence is TPYISPENEGYGWRWLEPQRARQLDGARG.

Belongs to the insulin family. Heterodimer of a B chain and an A chain linked by two disulfide bonds.

It localises to the secreted. In terms of biological role, brain peptide responsible for activation of prothoracic glands to produce ecdysone in insects. The sequence is that of Bombyxin A-1 homolog (SBXA1) from Samia cynthia (Ailanthus silkmoth).